Consider the following 445-residue polypeptide: Phosphoglucosamine mutase (445 aa).

Serine 99 serves as the catalytic Phosphoserine intermediate. Mg(2+) is bound by residues serine 99, aspartate 242, aspartate 244, and aspartate 246. Serine 99 is subject to Phosphoserine.

This sequence belongs to the phosphohexose mutase family. Requires Mg(2+) as cofactor. In terms of processing, activated by phosphorylation.

The enzyme catalyses alpha-D-glucosamine 1-phosphate = D-glucosamine 6-phosphate. Functionally, catalyzes the conversion of glucosamine-6-phosphate to glucosamine-1-phosphate. The chain is Phosphoglucosamine mutase from Helicobacter acinonychis (strain Sheeba).